The primary structure comprises 98 residues: Large ribosomal subunit protein eL21 (98 aa).

Positions 1–17 (MQRSRGFRSKSRRKMTK) are enriched in basic residues. The segment at 1–28 (MQRSRGFRSKSRRKMTKVVREGRSNPIT) is disordered.

It belongs to the eukaryotic ribosomal protein eL21 family.

The chain is Large ribosomal subunit protein eL21 from Methanobrevibacter smithii (strain ATCC 35061 / DSM 861 / OCM 144 / PS).